Consider the following 343-residue polypeptide: Protein RecA (343 aa).

66-73 (GPESSGKT) serves as a coordination point for ATP.

Belongs to the RecA family.

It is found in the cytoplasm. Functionally, can catalyze the hydrolysis of ATP in the presence of single-stranded DNA, the ATP-dependent uptake of single-stranded DNA by duplex DNA, and the ATP-dependent hybridization of homologous single-stranded DNAs. It interacts with LexA causing its activation and leading to its autocatalytic cleavage. The polypeptide is Protein RecA (Nitrosomonas europaea (strain ATCC 19718 / CIP 103999 / KCTC 2705 / NBRC 14298)).